The primary structure comprises 191 residues: Large ribosomal subunit protein uL22 (191 aa).

Basic and acidic residues predominate over residues valine 159 to glutamine 168. Positions valine 159–aspartate 191 are disordered. A compositionally biased stretch (basic residues) spans lysine 169–leucine 182.

The protein belongs to the universal ribosomal protein uL22 family.

This chain is Large ribosomal subunit protein uL22 (RPL17), found in Suberites domuncula (Sponge).